We begin with the raw amino-acid sequence, 131 residues long: Phosphoribosyl-AMP cyclohydrolase (131 aa).

Aspartate 78 provides a ligand contact to Mg(2+). Cysteine 79 serves as a coordination point for Zn(2+). 2 residues coordinate Mg(2+): aspartate 80 and aspartate 82. Positions 96 and 103 each coordinate Zn(2+).

It belongs to the PRA-CH family. In terms of assembly, homodimer. It depends on Mg(2+) as a cofactor. Requires Zn(2+) as cofactor.

Its subcellular location is the cytoplasm. The catalysed reaction is 1-(5-phospho-beta-D-ribosyl)-5'-AMP + H2O = 1-(5-phospho-beta-D-ribosyl)-5-[(5-phospho-beta-D-ribosylamino)methylideneamino]imidazole-4-carboxamide. It participates in amino-acid biosynthesis; L-histidine biosynthesis; L-histidine from 5-phospho-alpha-D-ribose 1-diphosphate: step 3/9. Catalyzes the hydrolysis of the adenine ring of phosphoribosyl-AMP. The sequence is that of Phosphoribosyl-AMP cyclohydrolase from Neisseria gonorrhoeae (strain ATCC 700825 / FA 1090).